Reading from the N-terminus, the 527-residue chain is D-3-phosphoglycerate dehydrogenase (527 aa).

Residues 149–150 (RV), Asp-169, 228–230 (AAR), and Asp-254 contribute to the NAD(+) site. Arg-230 is a catalytic residue. Residue Glu-259 is part of the active site. Residue His-278 is the Proton donor of the active site. 278-281 (HIAA) provides a ligand contact to NAD(+). The 75-residue stretch at 453 to 527 (YIISLHEDKP…GIIDATYVEL (75 aa)) folds into the ACT domain.

This sequence belongs to the D-isomer specific 2-hydroxyacid dehydrogenase family.

It catalyses the reaction (2R)-3-phosphoglycerate + NAD(+) = 3-phosphooxypyruvate + NADH + H(+). Its pathway is amino-acid biosynthesis; L-serine biosynthesis; L-serine from 3-phospho-D-glycerate: step 1/3. This is D-3-phosphoglycerate dehydrogenase (serA) from Archaeoglobus fulgidus (strain ATCC 49558 / DSM 4304 / JCM 9628 / NBRC 100126 / VC-16).